The chain runs to 838 residues: Envelope glycoprotein H (838 aa).

Residues 1–18 (MGNGLWFVGVIILGAAWG) form the signal peptide. The Virion surface segment spans residues 19–803 (QVHDWTEQTD…DTQPVAAIAP (785 aa)). N-linked (GlcNAc...) asparagine; by host glycans are attached at residues Asn73 and Asn120. Positions 174-204 (FPRGDNVATASHPSGPRDTPPPRPPVGARRH) are disordered. Asn216 carries N-linked (GlcNAc...) asparagine; by host glycosylation. The tract at residues 259 to 323 (DAALVRARYG…PGGPRYRVFV (65 aa)) is interaction with gL. N-linked (GlcNAc...) asparagine; by host glycans are attached at residues Asn332, Asn437, Asn670, and Asn784. The helical transmembrane segment at 804 to 824 (GFLAASALGVVMITAALAGIL) threads the bilayer. At 825–838 (KVLRTSVPFFWRRE) the chain is on the intravirion side.

The protein belongs to the herpesviridae glycoprotein H family. In terms of assembly, interacts with glycoprotein L (gL); this interaction is necessary for the correct processing and cell surface expression of gH. The heterodimer gH/gL seems to interact with gB trimers during fusion. N-glycosylated, O-glycosylated, and sialylated.

The protein localises to the virion membrane. Its subcellular location is the host cell membrane. The protein resides in the host endosome membrane. Its function is as follows. The heterodimer glycoprotein H-glycoprotein L is required for the fusion of viral and plasma membranes leading to virus entry into the host cell. Following initial binding to host receptor, membrane fusion is mediated by the fusion machinery composed of gB and the heterodimer gH/gL. May also be involved in the fusion between the virion envelope and the outer nuclear membrane during virion morphogenesis. The protein is Envelope glycoprotein H of Homo sapiens (Human).